Here is a 21-residue protein sequence, read N- to C-terminus: Nigrocin-2 (21 aa).

A disulfide bridge links Cys15 with Cys21.

Expressed by the skin dorsal glands.

The protein localises to the secreted. Thanks to its single linear amphipathic alpha-helix, may integrate into membrane phospholipids, leading to lysis of the membrane. Shows antibacterial activity against both Gram-positive and Gram-negative bacteria and against the fungus C.albicans. Has no hemolytic activity. The protein is Nigrocin-2 of Pelophylax nigromaculatus (Black-spotted frog).